Consider the following 545-residue polypeptide: CTP synthase (545 aa).

The segment at 1–266 (MTTNYIFVTG…DDYICKRFSL (266 aa)) is amidoligase domain. A CTP-binding site is contributed by Ser-14. Ser-14 is a UTP binding site. ATP-binding positions include 15-20 (SLGKGI) and Asp-72. The Mg(2+) site is built by Asp-72 and Glu-140. Residues 147–149 (DIE), 187–192 (KTKPTQ), and Lys-223 each bind CTP. UTP contacts are provided by residues 187–192 (KTKPTQ) and Lys-223. 239 to 241 (KDV) contacts ATP. Residues 291-542 (TIGMVGKYIE…VKAASEHQKR (252 aa)) form the Glutamine amidotransferase type-1 domain. Gly-352 is an L-glutamine binding site. The active-site Nucleophile; for glutamine hydrolysis is the Cys-379. L-glutamine is bound by residues 380–383 (LGMQ), Glu-403, and Arg-470. Catalysis depends on residues His-515 and Glu-517.

It belongs to the CTP synthase family. As to quaternary structure, homotetramer.

The catalysed reaction is UTP + L-glutamine + ATP + H2O = CTP + L-glutamate + ADP + phosphate + 2 H(+). The enzyme catalyses L-glutamine + H2O = L-glutamate + NH4(+). It carries out the reaction UTP + NH4(+) + ATP = CTP + ADP + phosphate + 2 H(+). It functions in the pathway pyrimidine metabolism; CTP biosynthesis via de novo pathway; CTP from UDP: step 2/2. With respect to regulation, allosterically activated by GTP, when glutamine is the substrate; GTP has no effect on the reaction when ammonia is the substrate. The allosteric effector GTP functions by stabilizing the protein conformation that binds the tetrahedral intermediate(s) formed during glutamine hydrolysis. Inhibited by the product CTP, via allosteric rather than competitive inhibition. Its function is as follows. Catalyzes the ATP-dependent amination of UTP to CTP with either L-glutamine or ammonia as the source of nitrogen. Regulates intracellular CTP levels through interactions with the four ribonucleotide triphosphates. The chain is CTP synthase from Salmonella schwarzengrund (strain CVM19633).